Reading from the N-terminus, the 318-residue chain is Vomeronasal type-1 receptor 45 (318 aa).

Residues 1–32 (MSEILFFSPQPLFSHMMNKNSRLHTHSNIKNT) lie on the Extracellular side of the membrane. A helical transmembrane segment spans residues 33 to 53 (FFSEIGIGILGNSFLLLFHIL). The Cytoplasmic portion of the chain corresponds to 54-65 (KFIRGHRLRLTD). Residues 66-86 (LPIGLLSLIHLLMLLLMAFIA) form a helical membrane-spanning segment. At 87–109 (TDIFISRRGWDDIICKFLVYLYR) the chain is on the extracellular side. Cysteines 101 and 188 form a disulfide. The helical transmembrane segment at 110–130 (VLRGLSLCTTSMLSVLQAIIL) threads the bilayer. Over 131 to 150 (SPRSSCLAKLKHKYPHHISC) the chain is Cytoplasmic. The chain crosses the membrane as a helical span at residues 151-171 (AIIFLSVLYMLISSHILLSII). The Extracellular portion of the chain corresponds to 172–206 (ATPNLTRNDFLYVTQSCSILPLSYVMQSMYSTLLA). N-linked (GlcNAc...) asparagine glycosylation occurs at asparagine 175. Residues 207–227 (LREVFLISLMVLSTLYMVVLL) traverse the membrane as a helical segment. Over 228–254 (CRHRKQAQHLQGTSLSPKASAEQRATQ) the chain is Cytoplasmic. The helical transmembrane segment at 255-275 (TILMLMTFFVLMSIFDSIVSC) threads the bilayer. Over 276-285 (SRTMFLDDPT) the chain is Extracellular. The helical transmembrane segment at 286-306 (SYSIHIFVMHIYATVSPFVFM) threads the bilayer. Topologically, residues 307–318 (STEKHIVNILRG) are cytoplasmic.

Belongs to the G-protein coupled receptor 1 family. As to expression, expressed in a subset of sensory neurons located in the apical layer of the vomeronasal organ.

The protein localises to the cell membrane. In terms of biological role, putative pheromone receptor implicated in the regulation of social and reproductive behavior. The chain is Vomeronasal type-1 receptor 45 (Vmn1r45) from Mus musculus (Mouse).